The sequence spans 368 residues: Phospho-N-acetylmuramoyl-pentapeptide-transferase (368 aa).

9 helical membrane-spanning segments follow: residues 50–70, 95–115, 117–137, 156–176, 183–203, 218–238, 242–262, 284–304, and 347–367; these read LLAL…VVPL, PTMG…ILAG, SPLV…GWLD, LCLQ…QQGW, ITLP…LAVF, LDGL…LWLA, PAIA…LLHN, AIAI…LFVL, and TQVV…CWLL.

Belongs to the glycosyltransferase 4 family. MraY subfamily. The cofactor is Mg(2+).

It localises to the cell inner membrane. The enzyme catalyses UDP-N-acetyl-alpha-D-muramoyl-L-alanyl-gamma-D-glutamyl-meso-2,6-diaminopimeloyl-D-alanyl-D-alanine + di-trans,octa-cis-undecaprenyl phosphate = di-trans,octa-cis-undecaprenyl diphospho-N-acetyl-alpha-D-muramoyl-L-alanyl-D-glutamyl-meso-2,6-diaminopimeloyl-D-alanyl-D-alanine + UMP. It functions in the pathway cell wall biogenesis; peptidoglycan biosynthesis. Functionally, catalyzes the initial step of the lipid cycle reactions in the biosynthesis of the cell wall peptidoglycan: transfers peptidoglycan precursor phospho-MurNAc-pentapeptide from UDP-MurNAc-pentapeptide onto the lipid carrier undecaprenyl phosphate, yielding undecaprenyl-pyrophosphoryl-MurNAc-pentapeptide, known as lipid I. In Synechococcus sp. (strain ATCC 27144 / PCC 6301 / SAUG 1402/1) (Anacystis nidulans), this protein is Phospho-N-acetylmuramoyl-pentapeptide-transferase.